Consider the following 1134-residue polypeptide: DNA polymerase II large subunit (1134 aa).

This sequence belongs to the archaeal DNA polymerase II family. Heterodimer of a large subunit and a small subunit.

The enzyme catalyses DNA(n) + a 2'-deoxyribonucleoside 5'-triphosphate = DNA(n+1) + diphosphate. It carries out the reaction Exonucleolytic cleavage in the 3'- to 5'-direction to yield nucleoside 5'-phosphates.. In terms of biological role, possesses two activities: a DNA synthesis (polymerase) and an exonucleolytic activity that degrades single-stranded DNA in the 3'- to 5'-direction. Has a template-primer preference which is characteristic of a replicative DNA polymerase. The sequence is that of DNA polymerase II large subunit from Methanocella arvoryzae (strain DSM 22066 / NBRC 105507 / MRE50).